A 626-amino-acid polypeptide reads, in one-letter code: Serine/threonine-protein kinase PknB (626 aa).

At 1–332 the chain is on the cytoplasmic side; that stretch reads MTTPSHLSDR…DRSIGSVGRW (332 aa). Residues 11–274 form the Protein kinase domain; the sequence is YELGEILGFG…TAAEMRADLV (264 aa). Residues 17 to 25, lysine 40, and 93 to 95 contribute to the ATP site; these read LGFGGMSEV and EYV. Residue aspartate 138 is the Proton acceptor of the active site. ATP contacts are provided by residues 140 to 143 and aspartate 156; that span reads KPAN. Positions 143 and 156 each coordinate Mg(2+). Phosphoserine; by autocatalysis is present on residues serine 166 and serine 169. Threonine 171, threonine 173, and threonine 294 each carry phosphothreonine; by autocatalysis. Serine 295 carries the phosphoserine; by autocatalysis modification. Positions 299–323 are disordered; sequence SAAGNLSGPRTDPLPRQDLDDTDRD. Threonine 309 is modified (phosphothreonine; by autocatalysis). Over residues 311-323 the composition is skewed to basic and acidic residues; the sequence is PLPRQDLDDTDRD. The helical transmembrane segment at 333–353 threads the bilayer; sequence VAVVAVLAVLTVVVTIAINTF. Residues 354 to 626 lie on the Extracellular side of the membrane; the sequence is GGITRDVQVP…DGIITLRFGQ (273 aa). PASTA domains are found at residues 356–422, 423–490, 491–557, and 558–626; these read ITRD…NVST, GPEQ…IVGS, GPAT…QVSK, and GNQF…RFGQ.

This sequence belongs to the protein kinase superfamily. Ser/Thr protein kinase family. As to quaternary structure, homodimer. In terms of processing, autophosphorylated. Dephosphorylated by PstP.

It is found in the cell membrane. The enzyme catalyses L-seryl-[protein] + ATP = O-phospho-L-seryl-[protein] + ADP + H(+). The catalysed reaction is L-threonyl-[protein] + ATP = O-phospho-L-threonyl-[protein] + ADP + H(+). Protein kinase that regulates many aspects of mycobacterial physiology. Is a key component of a signal transduction pathway that regulates cell growth, cell shape and cell division via phosphorylation of target proteins. The protein is Serine/threonine-protein kinase PknB (pknB) of Mycobacterium bovis (strain ATCC BAA-935 / AF2122/97).